We begin with the raw amino-acid sequence, 484 residues long: Adenylosuccinate lyase (484 aa).

Position 2 is an N-acetylalanine (Ala-2). Substrate-binding positions include 20 to 21 (RY), 85 to 87 (RHD), and 111 to 112 (TS). Lys-147 carries the post-translational modification N6-acetyllysine. His-159 (proton donor/acceptor) is an active-site residue. Gln-241 is a substrate binding site. Ser-289 acts as the Proton donor/acceptor in catalysis. The residue at position 295 (Lys-295) is an N6-acetyllysine. The substrate site is built by Arg-303, Arg-329, Ser-334, and Arg-338. Lys-415 is covalently cross-linked (Glycyl lysine isopeptide (Lys-Gly) (interchain with G-Cter in SUMO1)).

Belongs to the lyase 1 family. Adenylosuccinate lyase subfamily. As to quaternary structure, homotetramer. Residues from neighboring subunits contribute catalytic and substrate-binding residues to each active site. As to expression, ubiquitously expressed. Both isoforms are produced by all tissues. Isoform 2 is 10-fold less abundant than isoform 1.

It carries out the reaction N(6)-(1,2-dicarboxyethyl)-AMP = fumarate + AMP. The catalysed reaction is (2S)-2-[5-amino-1-(5-phospho-beta-D-ribosyl)imidazole-4-carboxamido]succinate = 5-amino-1-(5-phospho-beta-D-ribosyl)imidazole-4-carboxamide + fumarate. It functions in the pathway purine metabolism; AMP biosynthesis via de novo pathway; AMP from IMP: step 2/2. Its pathway is purine metabolism; IMP biosynthesis via de novo pathway; 5-amino-1-(5-phospho-D-ribosyl)imidazole-4-carboxamide from 5-amino-1-(5-phospho-D-ribosyl)imidazole-4-carboxylate: step 2/2. With respect to regulation, the enzyme reaction kinetics indicate cooperativity between subunits. Catalyzes two non-sequential steps in de novo AMP synthesis: converts (S)-2-(5-amino-1-(5-phospho-D-ribosyl)imidazole-4-carboxamido)succinate (SAICAR) to fumarate plus 5-amino-1-(5-phospho-D-ribosyl)imidazole-4-carboxamide, and thereby also contributes to de novo IMP synthesis, and converts succinyladenosine monophosphate (SAMP) to AMP and fumarate. The sequence is that of Adenylosuccinate lyase (ADSL) from Homo sapiens (Human).